We begin with the raw amino-acid sequence, 495 residues long: DNA double-strand break repair helicase HerA (495 aa).

Residues Arg-141, 150 to 155 (GSGKSN), and 458 to 459 (KI) each bind ATP.

The protein belongs to the HerA family. In terms of assembly, forms a hexamer or a heptamer. Interacts with Mre11.

The enzyme catalyses Couples ATP hydrolysis with the unwinding of duplex DNA at the replication fork by translocating in the 5'-3' direction. This creates two antiparallel DNA single strands (ssDNA). The leading ssDNA polymer is the template for DNA polymerase III holoenzyme which synthesizes a continuous strand.. The catalysed reaction is ATP + H2O = ADP + phosphate + H(+). It catalyses the reaction Couples ATP hydrolysis with the unwinding of duplex DNA by translocating in the 3'-5' direction.. With respect to regulation, ATPase activity is slightly stimulated by either circular single- or double-stranded (ds)DNA with a weak preference for dsDNA. Helicase activity is stimulated by Mre11. In terms of biological role, involved in DNA double-strand break (DSB) repair. Probably acts with NurA to stimulate resection of the 5' strand and produce the long 3' single-strand that is required for RadA loading. Has DNA-dependent ATPase activity and bidirectional DNA helicase activity. Loads on either a 3' or a 5' DNA tail for subsequent DNA unwinding. Can also unwind blunt-ended dsDNA, Holliday junction and splayed-arm DNA. The protein is DNA double-strand break repair helicase HerA of Sulfurisphaera tokodaii (strain DSM 16993 / JCM 10545 / NBRC 100140 / 7) (Sulfolobus tokodaii).